The primary structure comprises 205 residues: Holliday junction branch migration complex subunit RuvA (205 aa).

The interval 1 to 68 (MIGYLEGTLL…QPKPVLIGFN (68 aa)) is domain I. The segment at 69 to 146 (TEEEKDFFHL…RFADAGHSSA (78 aa)) is domain II. Positions 147–151 (PDVPV) are flexible linker. Residues 152–205 (TGSLADQTVEVLVGQLGYKPNEARLMVAGALKRNPDVSTPEALFDEIFKHGQAQ) form a domain III region.

Belongs to the RuvA family. In terms of assembly, homotetramer. Forms an RuvA(8)-RuvB(12)-Holliday junction (HJ) complex. HJ DNA is sandwiched between 2 RuvA tetramers; dsDNA enters through RuvA and exits via RuvB. An RuvB hexamer assembles on each DNA strand where it exits the tetramer. Each RuvB hexamer is contacted by two RuvA subunits (via domain III) on 2 adjacent RuvB subunits; this complex drives branch migration. In the full resolvosome a probable DNA-RuvA(4)-RuvB(12)-RuvC(2) complex forms which resolves the HJ.

It localises to the cytoplasm. The RuvA-RuvB-RuvC complex processes Holliday junction (HJ) DNA during genetic recombination and DNA repair, while the RuvA-RuvB complex plays an important role in the rescue of blocked DNA replication forks via replication fork reversal (RFR). RuvA specifically binds to HJ cruciform DNA, conferring on it an open structure. The RuvB hexamer acts as an ATP-dependent pump, pulling dsDNA into and through the RuvAB complex. HJ branch migration allows RuvC to scan DNA until it finds its consensus sequence, where it cleaves and resolves the cruciform DNA. In Desulfosudis oleivorans (strain DSM 6200 / JCM 39069 / Hxd3) (Desulfococcus oleovorans), this protein is Holliday junction branch migration complex subunit RuvA.